A 422-amino-acid chain; its full sequence is MLRVRCLRGGSRGAEAAHLIGALVGRALSGRLSRASRSSSSSAAAQLPLSAHEQVPEPTAEECPVCAHNEWDPLEEVIVGRAENACVPPFTVEVKANTYEKYWPFYQQYGGQTFPKEHVQKAVAEIEEMCNILQHEGVTVRRPEPVDWSLEYRTPDFSSTGMYAAMPRDILMVVGNEIIEAPMAWRARFFEYRAYRPLIKEYFRRGARWTTAPKPTMADQLYDQDYPIRTVEDRHKLAAQGKFVTTEFEPCFDAADFIRAGTDIFVQRSQVTNYMGIEWMRRHLSPTYKIHIISFKDPNPMHIDATFNIIGPGLVLSNPDRPCRQIEMFKKAGWTVVTPPTPLIPDNHPLWMSSKWLSMNVLMLDEKRVMVDANESTIQKMFESLGIKTVKVSIRHANSLGGGFHCWTTDVRRRGTLQSYFL.

Catalysis depends on residues aspartate 253 and histidine 302. The active-site Amidino-cysteine intermediate is the cysteine 406.

Belongs to the amidinotransferase family. As to quaternary structure, homodimer. As to expression, strongly expressed in neurons and glia of the brain, the lamina propria, submucosa and serosa of the small intestine, in oocytes and on the fringes of the pancreas. Not expressed in the retina, eye lens, heart or bulbus arteriosus. Expressed in the yolk syncytial layer in gastrula stage embryos, in the yolk syncytial layer and mature somites in early segmentation embryos and in the yolk syncytial layer and the liver of long-pec stage (48 hours post-fertilization) embryos.

Its subcellular location is the mitochondrion inner membrane. The catalysed reaction is L-arginine + glycine = guanidinoacetate + L-ornithine. It functions in the pathway amine and polyamine biosynthesis; creatine biosynthesis; creatine from L-arginine and glycine: step 1/2. Functionally, catalyzes the biosynthesis of guanidinoacetate, the immediate precursor of creatine. Creatine plays a vital role in energy metabolism in muscle tissues. May play a role in embryonic and central nervous system development. The sequence is that of Glycine amidinotransferase, mitochondrial from Danio rerio (Zebrafish).